The primary structure comprises 1097 residues: Protein toll (1097 aa).

The signal sequence occupies residues 1 to 27; the sequence is MSRLKAASELALLVIILQLLQWPGSEA. Over 28-807 the chain is Extracellular; that stretch reads SFGRDACSEM…ICPAEKGVFI (780 aa). Cystine bridges form between cysteine 34-cysteine 45, cysteine 43-cysteine 56, and cysteine 79-cysteine 107. Asparagine 80, asparagine 140, and asparagine 175 each carry an N-linked (GlcNAc...) asparagine glycan. 15 LRR repeats span residues 175-195, 198-219, 222-243, 246-267, 270-291, 294-314, 320-340, 343-364, 367-388, 391-412, 415-436, 439-460, 474-495, 498-521, and 523-544; these read NLSH…LFDD, NLES…IFGK, KLKQ…DFEG, SVLG…VFAH, NVTD…LFDH, HLNE…PSRL, ELQI…LFEH, QITN…LLEH, NLLS…LFAH, NLTD…IFSN, NLVT…AFVS, GLRH…LDIM, GLLT…WKNT, QLRE…AFLS, and NRLH…EDVH. N-linked (GlcNAc...) asparagine glycosylation is present at asparagine 235. Asparagine 270 and asparagine 275 each carry an N-linked (GlcNAc...) asparagine glycan. N-linked (GlcNAc...) asparagine glycosylation is present at asparagine 346. A glycan (N-linked (GlcNAc...) asparagine) is linked at asparagine 391. N-linked (GlcNAc...) asparagine glycosylation is found at asparagine 482, asparagine 508, and asparagine 528. Positions 561–620 constitute an LRRCT 1 domain; that stretch reads NPLVCDCTILWFIQLVRGVHKPQYSRQFKLRTDRLVCSQPNVLEGTPVRQIEPQTLICPL. Intrachain disulfides connect cysteine 565-cysteine 597, cysteine 567-cysteine 618, cysteine 631-cysteine 637, and cysteine 635-cysteine 650. An LRRNT domain is found at 622-663; it reads FSDDPRERKCPRGCNCHVRTYDKALVINCHSGNLTHVPRLPN. N-linked (GlcNAc...) asparagine glycosylation is found at asparagine 654, asparagine 677, asparagine 703, asparagine 715, asparagine 730, and asparagine 738. LRR repeat units lie at residues 669-690, 693-713, and 715-738; these read QLME…NTPG, SVTS…DQLP, and NLTH…GFLN. The region spanning 751 to 801 is the LRRCT 2 domain; that stretch reads NPWMCDCTAKPLLLFTQDNFERIGDRNEMMCVNAEMPTRMVELSTNDICPA. Intrachain disulfides connect cysteine 755-cysteine 781 and cysteine 757-cysteine 799. A helical membrane pass occupies residues 808–828; that stretch reads ALAVVIALTGLLAGFTAALYY. Residues 829 to 1097 are Cytoplasmic-facing; sequence KFQTEIKIWL…INTNAKQSDV (269 aa). The TIR domain occupies 857-993; the sequence is KKFDAFISYS…WFWDKLRFAL (137 aa).

The protein belongs to the Toll-like receptor family. As to quaternary structure, in the absence of ligand, forms a low-affinity disulfide-linked homodimer. In the presence of ligand, crystal structures show one Tl molecule bound to a spaetzle C-106 homodimer. However, the active complex probably consists of two Tl molecules bound to a spaetzle C-106 homodimer. This is supported by in vitro experiments which also show binding of the spaetzle C-106 dimer to 2 Tl receptors. Ligand binding induces conformational changes in the extracellular domain of Tl. This may enable a secondary homodimerization interface at the C-terminus of the Tl extracellular domain. As to expression, in early embryos, concentrated in the pseudocleavage furrows that form transiently between nuclei before cellularization and in the cleavage furrows during cellularization (at protein level). Later, found on cells in the mesectoderm, stomodeum, proctodeum, anterior and posterior midguts, splanchnopleura, salivary gland placode and adjacent to the segmentally repeated tracheal placodes (at protein level). During and after germ band shortening, localized in a number of cell types, including the salivary gland, foregut, hindgut, Malpighian tubules and epidermis (at protein level). In embryos, high expression in M13 with comparatively low expression in M12.

Its subcellular location is the cell membrane. The protein resides in the cytoplasm. Its function is as follows. Receptor for the cleaved activated form of spz, spaetzle C-106. Binding to spaetzle C-106 activates the Toll signaling pathway and induces expression of the antifungal peptide drosomycin. Component of the extracellular signaling pathway that establishes dorsal-ventral polarity in the embryo. Promotes heterophilic cellular adhesion. Involved in synaptic targeting of motoneurons RP5 and V to muscle 12 (M12); functions as a repulsive cue inhibiting motoneuron synapse formation on muscle 13 (M13) to guide RP5 and V to the neighboring M12, where its expression is repressed by tey. May also function in embryonic neuronal survival and the synaptic targeting of SNa motoneurons. This Drosophila melanogaster (Fruit fly) protein is Protein toll.